Reading from the N-terminus, the 272-residue chain is NH(3)-dependent NAD(+) synthetase (272 aa).

45–52 (GISGGQDS) contacts ATP. Aspartate 51 is a Mg(2+) binding site. Arginine 138 contacts deamido-NAD(+). An ATP-binding site is contributed by threonine 158. Glutamate 163 is a Mg(2+) binding site. The deamido-NAD(+) site is built by lysine 171 and aspartate 178. ATP-binding residues include lysine 187 and threonine 209. Position 258–259 (258–259 (HK)) interacts with deamido-NAD(+).

Belongs to the NAD synthetase family. In terms of assembly, homodimer.

The enzyme catalyses deamido-NAD(+) + NH4(+) + ATP = AMP + diphosphate + NAD(+) + H(+). The protein operates within cofactor biosynthesis; NAD(+) biosynthesis; NAD(+) from deamido-NAD(+) (ammonia route): step 1/1. Its function is as follows. Catalyzes the ATP-dependent amidation of deamido-NAD to form NAD. Uses ammonia as a nitrogen source. In Bacillus cereus (strain G9842), this protein is NH(3)-dependent NAD(+) synthetase.